Reading from the N-terminus, the 360-residue chain is Histidinol-phosphate aminotransferase (360 aa).

N6-(pyridoxal phosphate)lysine is present on Lys-211.

The protein belongs to the class-II pyridoxal-phosphate-dependent aminotransferase family. Histidinol-phosphate aminotransferase subfamily. In terms of assembly, homodimer. Requires pyridoxal 5'-phosphate as cofactor.

The catalysed reaction is L-histidinol phosphate + 2-oxoglutarate = 3-(imidazol-4-yl)-2-oxopropyl phosphate + L-glutamate. It participates in amino-acid biosynthesis; L-histidine biosynthesis; L-histidine from 5-phospho-alpha-D-ribose 1-diphosphate: step 7/9. This is Histidinol-phosphate aminotransferase from Cronobacter sakazakii (strain ATCC BAA-894) (Enterobacter sakazakii).